Here is a 344-residue protein sequence, read N- to C-terminus: uncharacterized protein (344 aa).

A run of 8 helical transmembrane segments spans residues 25 to 45 (GAGW…VGAV), 68 to 88 (FVDA…ADGV), 104 to 124 (GVVP…GWNC), 133 to 153 (SACA…GVGA), 161 to 181 (GVGT…LAVV), 224 to 244 (LGAF…DAAL), 276 to 296 (VFAL…PAAL), and 302 to 322 (LVTA…LAGV).

The protein belongs to the peptidase S58 family.

The protein resides in the cell membrane. Aminopeptidase. This is an uncharacterized protein from Mycobacterium bovis (strain ATCC BAA-935 / AF2122/97).